The sequence spans 94 residues: Integration host factor subunit beta (94 aa).

It belongs to the bacterial histone-like protein family. In terms of assembly, heterodimer of an alpha and a beta chain.

This protein is one of the two subunits of integration host factor, a specific DNA-binding protein that functions in genetic recombination as well as in transcriptional and translational control. This chain is Integration host factor subunit beta, found in Escherichia coli O127:H6 (strain E2348/69 / EPEC).